Consider the following 545-residue polypeptide: CTP synthase (545 aa).

Residues 1 to 266 are amidoligase domain; that stretch reads MTHFIFVTGG…DDLICERFGY (266 aa). Ser13 lines the CTP pocket. Residue Ser13 participates in UTP binding. ATP-binding positions include 14 to 19 and Asp71; that span reads SLGKGI. Mg(2+) contacts are provided by Asp71 and Glu140. Residues 147 to 149, 187 to 192, and Lys223 each bind CTP; these read DIE and KTKPTQ. Residues 187–192 and Lys223 contribute to the UTP site; that span reads KTKPTQ. 239-241 serves as a coordination point for ATP; it reads KDA. The region spanning 292–543 is the Glutamine amidotransferase type-1 domain; sequence RVAMVGKYVE…IDAAKKQHLK (252 aa). Gly353 lines the L-glutamine pocket. Catalysis depends on Cys380, which acts as the Nucleophile; for glutamine hydrolysis. Residues 381–384, Glu404, and Arg471 contribute to the L-glutamine site; that span reads LGMQ. Active-site residues include His516 and Glu518.

This sequence belongs to the CTP synthase family. Homotetramer.

The catalysed reaction is UTP + L-glutamine + ATP + H2O = CTP + L-glutamate + ADP + phosphate + 2 H(+). It carries out the reaction L-glutamine + H2O = L-glutamate + NH4(+). It catalyses the reaction UTP + NH4(+) + ATP = CTP + ADP + phosphate + 2 H(+). It participates in pyrimidine metabolism; CTP biosynthesis via de novo pathway; CTP from UDP: step 2/2. Allosterically activated by GTP, when glutamine is the substrate; GTP has no effect on the reaction when ammonia is the substrate. The allosteric effector GTP functions by stabilizing the protein conformation that binds the tetrahedral intermediate(s) formed during glutamine hydrolysis. Inhibited by the product CTP, via allosteric rather than competitive inhibition. Catalyzes the ATP-dependent amination of UTP to CTP with either L-glutamine or ammonia as the source of nitrogen. Regulates intracellular CTP levels through interactions with the four ribonucleotide triphosphates. This Acinetobacter baylyi (strain ATCC 33305 / BD413 / ADP1) protein is CTP synthase.